Consider the following 349-residue polypeptide: Draxin (349 aa).

A signal peptide spans 1-25 (MAGPAIHTAPMLFLVLLLPLELSLA). Disordered regions lie at residues 38–79 (PENH…QDGA), 118–145 (PYPE…RRDR), and 244–273 (DGWP…EGEP). The span at 120–131 (PEKENRPPGWER) shows a compositional bias: basic and acidic residues. 2 stretches are compositionally biased toward basic residues: residues 132–145 (TRKR…RRDR) and 249–258 (AKKKEKHRGK). N264 carries N-linked (GlcNAc...) asparagine glycosylation.

The protein belongs to the draxin family. As to quaternary structure, interacts with LRP6.

It is found in the secreted. Its function is as follows. Chemorepulsive axon guidance protein required for the development of spinal cord and forebrain commissures. Acts as a chemorepulsive guidance protein for commissural axons during development. Able to inhibit or repel neurite outgrowth from dorsal spinal cord. Inhibits the stabilization of cytosolic beta-catenin (CTNNB1) via its interaction with LRP6, thereby acting as an antagonist of Wnt signaling pathway. This is Draxin from Homo sapiens (Human).